The primary structure comprises 106 residues: Thioredoxin (106 aa).

Residues 2–106 (VQVISNLDEF…LESLVQKSLA (105 aa)) enclose the Thioredoxin domain. Catalysis depends on nucleophile residues Cys-30 and Cys-33. The cysteines at positions 30 and 33 are disulfide-linked.

Belongs to the thioredoxin family.

In terms of biological role, participates in various redox reactions through the reversible oxidation of its active center dithiol to a disulfide and catalyzes dithiol-disulfide exchange reactions. This Coprinus comatus (Shaggy mane) protein is Thioredoxin.